Consider the following 365-residue polypeptide: Snurportin-1 (365 aa).

Residues 10-72 (GGVALAAPNS…RLAEGDWAGV (63 aa)) enclose the IBB domain. Disordered stretches follow at residues 15–34 (AAPN…KGRG) and 69–90 (WAGV…EMEV). The segment covering 73-90 (ESDEDGGEDGDGEEEMEV) has biased composition (acidic residues). Residues 129–131 (GKR) are interaction with m3G-cap structure. The segment at 211–333 (LSSKIQEEEG…GKAQPSAEAA (123 aa)) is necessary for binding to the m3G-cap structure. The interval 317-365 (RSKKLAAGKAQPSAEAAARNGHYELEHLSTPQPANSAQGQEEAGSQMEN) is disordered. A compositionally biased stretch (polar residues) spans 345-355 (STPQPANSAQG).

The protein belongs to the snurportin family.

Its subcellular location is the nucleus. The protein localises to the cytoplasm. Its function is as follows. Functions as an U snRNP-specific nuclear import adapter. Involved in the trimethylguanosine (m3G)-cap-dependent nuclear import of U snRNPs. Binds specifically to the terminal m3G-cap U snRNAs. The sequence is that of Snurportin-1 (SNUPN) from Gallus gallus (Chicken).